Reading from the N-terminus, the 243-residue chain is 3-deoxy-manno-octulosonate cytidylyltransferase (243 aa).

The protein belongs to the KdsB family.

It localises to the cytoplasm. The enzyme catalyses 3-deoxy-alpha-D-manno-oct-2-ulosonate + CTP = CMP-3-deoxy-beta-D-manno-octulosonate + diphosphate. It participates in nucleotide-sugar biosynthesis; CMP-3-deoxy-D-manno-octulosonate biosynthesis; CMP-3-deoxy-D-manno-octulosonate from 3-deoxy-D-manno-octulosonate and CTP: step 1/1. The protein operates within bacterial outer membrane biogenesis; lipopolysaccharide biosynthesis. Its function is as follows. Activates KDO (a required 8-carbon sugar) for incorporation into bacterial lipopolysaccharide in Gram-negative bacteria. This is 3-deoxy-manno-octulosonate cytidylyltransferase from Helicobacter acinonychis (strain Sheeba).